The chain runs to 222 residues: Transmembrane reductase CYB561D2 (222 aa).

The Cytoplasmic segment spans residues 2–17 (ALSAETESHIYRALRT). A Cytochrome b561 domain is found at 14 to 217 (ALRTASGAAA…NQVSNAYLYR (204 aa)). A helical transmembrane segment spans residues 18-38 (ASGAAAHLVALGFTIFVAVLA). The Lumenal segment spans residues 39-46 (RPGSSLFS). The helical transmembrane segment at 47–67 (WHPVLMSLAFSFLMTEALLVF) threads the bilayer. H48 contributes to the heme b binding site. Residues 68-85 (SPESSLLHSLSRKGRARC) lie on the Cytoplasmic side of the membrane. Residues H86 and H120 each contribute to the heme b site. A helical transmembrane segment spans residues 86-106 (HWVLQLLALLCALLGLGLVIL). Residues 107-122 (HKEQLGKAHLVTRHGQ) are Lumenal-facing. A helical membrane pass occupies residues 123–143 (AGLLAVLWAGLQCSGGVGLLY). Residues 144–162 (PKLLPRWPLAKLKLYHATS) lie on the Cytoplasmic side of the membrane. Position 159 (H159) interacts with heme b. Residues 163-183 (GLVGYLLGSASLLLGMCSLWF) traverse the membrane as a helical segment. Topologically, residues 184-186 (TAS) are lumenal. A helical membrane pass occupies residues 187 to 207 (VTGAAWYLAVLCPVLTSLVIM). The Cytoplasmic segment spans residues 208 to 222 (NQVSNAYLYRKRIQP).

Heme b is required as a cofactor.

The protein resides in the endoplasmic reticulum membrane. It is found in the cytoplasmic vesicle membrane. The enzyme catalyses monodehydro-L-ascorbate radical(out) + L-ascorbate(in) = monodehydro-L-ascorbate radical(in) + L-ascorbate(out). The catalysed reaction is Fe(3+)(out) + L-ascorbate(in) = monodehydro-L-ascorbate radical(in) + Fe(2+)(out) + H(+). In terms of biological role, transmembrane reductase that may use ascorbate as an electron donor in the cytoplasm and transfer electrons across endoplasmic reticulum membranes to reduce monodehydro-L-ascorbate radical and iron cations Fe(3+) in the lumen of that compartment. The sequence is that of Transmembrane reductase CYB561D2 from Homo sapiens (Human).